The primary structure comprises 172 residues: Large ribosomal subunit protein uL10 (172 aa).

Belongs to the universal ribosomal protein uL10 family. As to quaternary structure, part of the ribosomal stalk of the 50S ribosomal subunit. The N-terminus interacts with L11 and the large rRNA to form the base of the stalk. The C-terminus forms an elongated spine to which L12 dimers bind in a sequential fashion forming a multimeric L10(L12)X complex.

Functionally, forms part of the ribosomal stalk, playing a central role in the interaction of the ribosome with GTP-bound translation factors. The chain is Large ribosomal subunit protein uL10 from Rhodopseudomonas palustris (strain TIE-1).